Here is a 350-residue protein sequence, read N- to C-terminus: Putative [LysW]-lysine/[LysW]-ornithine hydrolase (350 aa).

A Zn(2+)-binding site is contributed by histidine 72. Aspartate 74 is an active-site residue. Aspartate 96 serves as a coordination point for Zn(2+). Glutamate 128 acts as the Proton acceptor in catalysis. Glutamate 129, glutamate 152, and histidine 321 together coordinate Zn(2+).

It belongs to the peptidase M20A family. LysK subfamily. It depends on Zn(2+) as a cofactor. Co(2+) is required as a cofactor.

It localises to the cytoplasm. It carries out the reaction [amino-group carrier protein]-C-terminal-gamma-(L-lysyl)-L-glutamate + H2O = [amino-group carrier protein]-C-terminal-L-glutamate + L-lysine. It catalyses the reaction [amino-group carrier protein]-C-terminal-gamma-(L-ornithyl)-L-glutamate + H2O = [amino-group carrier protein]-C-terminal-L-glutamate + L-ornithine. The protein operates within amino-acid biosynthesis; L-lysine biosynthesis via AAA pathway; L-lysine from L-alpha-aminoadipate (Thermus route): step 5/5. It participates in amino-acid biosynthesis; L-arginine biosynthesis. Catalyzes the release of L-lysine from [LysW]-gamma-L-lysine and the release of L-ornithine from [LysW]-L-ornithine. In Aeropyrum pernix (strain ATCC 700893 / DSM 11879 / JCM 9820 / NBRC 100138 / K1), this protein is Putative [LysW]-lysine/[LysW]-ornithine hydrolase.